The following is a 69-amino-acid chain: Putative membrane protein insertion efficiency factor (69 aa).

The protein belongs to the UPF0161 family.

It localises to the cell inner membrane. Functionally, could be involved in insertion of integral membrane proteins into the membrane. The sequence is that of Putative membrane protein insertion efficiency factor from Geobacter sulfurreducens (strain ATCC 51573 / DSM 12127 / PCA).